A 151-amino-acid chain; its full sequence is Deoxyuridine 5'-triphosphate nucleotidohydrolase (151 aa).

Substrate contacts are provided by residues 70 to 72 (RSG), asparagine 83, 87 to 89 (LID), and methionine 97.

Belongs to the dUTPase family. Mg(2+) serves as cofactor.

It carries out the reaction dUTP + H2O = dUMP + diphosphate + H(+). Its pathway is pyrimidine metabolism; dUMP biosynthesis; dUMP from dCTP (dUTP route): step 2/2. Functionally, this enzyme is involved in nucleotide metabolism: it produces dUMP, the immediate precursor of thymidine nucleotides and it decreases the intracellular concentration of dUTP so that uracil cannot be incorporated into DNA. This Pseudomonas fluorescens (strain ATCC BAA-477 / NRRL B-23932 / Pf-5) protein is Deoxyuridine 5'-triphosphate nucleotidohydrolase.